The sequence spans 85 residues: Large ribosomal subunit protein bL27 (85 aa).

Residues methionine 1–leucine 21 form a disordered region.

The protein belongs to the bacterial ribosomal protein bL27 family.

The polypeptide is Large ribosomal subunit protein bL27 (Erwinia tasmaniensis (strain DSM 17950 / CFBP 7177 / CIP 109463 / NCPPB 4357 / Et1/99)).